The chain runs to 738 residues: Conserved oligomeric Golgi complex subunit 4 (738 aa).

It belongs to the COG4 family. As to quaternary structure, component of the conserved oligomeric Golgi complex which is composed of eight different subunits and is required for normal Golgi morphology and localization. Interacts with COG2 and COG3.

The protein resides in the golgi apparatus membrane. Required for normal Golgi function. The polypeptide is Conserved oligomeric Golgi complex subunit 4 (Arabidopsis thaliana (Mouse-ear cress)).